The primary structure comprises 337 residues: Lipoyl synthase (337 aa).

[4Fe-4S] cluster contacts are provided by Cys81, Cys86, Cys92, Cys107, Cys111, Cys114, and Ser323. Residues 93–312 (FSHGTATFMI…EEYGNALGFS (220 aa)) enclose the Radical SAM core domain.

The protein belongs to the radical SAM superfamily. Lipoyl synthase family. It depends on [4Fe-4S] cluster as a cofactor.

The protein resides in the cytoplasm. The enzyme catalyses [[Fe-S] cluster scaffold protein carrying a second [4Fe-4S](2+) cluster] + N(6)-octanoyl-L-lysyl-[protein] + 2 oxidized [2Fe-2S]-[ferredoxin] + 2 S-adenosyl-L-methionine + 4 H(+) = [[Fe-S] cluster scaffold protein] + N(6)-[(R)-dihydrolipoyl]-L-lysyl-[protein] + 4 Fe(3+) + 2 hydrogen sulfide + 2 5'-deoxyadenosine + 2 L-methionine + 2 reduced [2Fe-2S]-[ferredoxin]. It functions in the pathway protein modification; protein lipoylation via endogenous pathway; protein N(6)-(lipoyl)lysine from octanoyl-[acyl-carrier-protein]: step 2/2. Its function is as follows. Catalyzes the radical-mediated insertion of two sulfur atoms into the C-6 and C-8 positions of the octanoyl moiety bound to the lipoyl domains of lipoate-dependent enzymes, thereby converting the octanoylated domains into lipoylated derivatives. This is Lipoyl synthase from Xanthomonas campestris pv. campestris (strain 8004).